Here is a 457-residue protein sequence, read N- to C-terminus: tRNA (guanine(37)-N(1))-methyltransferase (457 aa).

S-adenosyl-L-methionine-binding positions include H240, 278–279, 306–307, and N338; these read DL and DG.

It belongs to the class I-like SAM-binding methyltransferase superfamily. TRM5/TYW2 family. Monomer.

It localises to the mitochondrion matrix. The protein localises to the nucleus. It is found in the cytoplasm. The enzyme catalyses guanosine(37) in tRNA + S-adenosyl-L-methionine = N(1)-methylguanosine(37) in tRNA + S-adenosyl-L-homocysteine + H(+). Functionally, specifically methylates the N1 position of guanosine-37 in various cytoplasmic and mitochondrial tRNAs. Methylation is not dependent on the nature of the nucleoside 5' of the target nucleoside. This is the first step in the biosynthesis of wybutosine (yW), a modified base adjacent to the anticodon of tRNAs and required for accurate decoding. This Drosophila melanogaster (Fruit fly) protein is tRNA (guanine(37)-N(1))-methyltransferase.